We begin with the raw amino-acid sequence, 249 residues long: Probable transcriptional regulatory protein ZMO0153 (249 aa).

It belongs to the TACO1 family.

Its subcellular location is the cytoplasm. This Zymomonas mobilis subsp. mobilis (strain ATCC 31821 / ZM4 / CP4) protein is Probable transcriptional regulatory protein ZMO0153.